Here is a 410-residue protein sequence, read N- to C-terminus: Peptidase T (410 aa).

A Zn(2+)-binding site is contributed by His-79. The active site involves Asp-81. Asp-142 provides a ligand contact to Zn(2+). The active-site Proton acceptor is Glu-176. The Zn(2+) site is built by Glu-177, Asp-199, and His-381.

The protein belongs to the peptidase M20B family. Zn(2+) serves as cofactor.

The protein resides in the cytoplasm. The enzyme catalyses Release of the N-terminal residue from a tripeptide.. In terms of biological role, cleaves the N-terminal amino acid of tripeptides. The polypeptide is Peptidase T (Listeria welshimeri serovar 6b (strain ATCC 35897 / DSM 20650 / CCUG 15529 / CIP 8149 / NCTC 11857 / SLCC 5334 / V8)).